The primary structure comprises 508 residues: GMP synthase [glutamine-hydrolyzing] (508 aa).

Residues 1 to 189 enclose the Glutamine amidotransferase type-1 domain; the sequence is MILVLDFGSQ…ALLVCGCEKT (189 aa). Cys78 serves as the catalytic Nucleophile. Active-site residues include His163 and Glu165. A GMPS ATP-PPase domain is found at 190-383; the sequence is WGMQHFAQRE…LGVSQDFLMH (194 aa). 217 to 223 contributes to the ATP binding site; sequence SGGVDST.

Homodimer.

It catalyses the reaction XMP + L-glutamine + ATP + H2O = GMP + L-glutamate + AMP + diphosphate + 2 H(+). It participates in purine metabolism; GMP biosynthesis; GMP from XMP (L-Gln route): step 1/1. Catalyzes the synthesis of GMP from XMP. In Helicobacter pylori (strain G27), this protein is GMP synthase [glutamine-hydrolyzing].